Here is a 124-residue protein sequence, read N- to C-terminus: S-adenosylmethionine decarboxylase proenzyme (124 aa).

Ser63 serves as the catalytic Schiff-base intermediate with substrate; via pyruvic acid. Ser63 bears the Pyruvic acid (Ser); by autocatalysis mark. Catalysis depends on His68, which acts as the Proton acceptor; for processing activity. Cys83 functions as the Proton donor; for catalytic activity in the catalytic mechanism.

It belongs to the prokaryotic AdoMetDC family. Type 1 subfamily. As to quaternary structure, heterotetramer of two alpha and two beta chains arranged as a dimer of alpha/beta heterodimers. Requires pyruvate as cofactor. In terms of processing, is synthesized initially as an inactive proenzyme. Formation of the active enzyme involves a self-maturation process in which the active site pyruvoyl group is generated from an internal serine residue via an autocatalytic post-translational modification. Two non-identical subunits are generated from the proenzyme in this reaction, and the pyruvate is formed at the N-terminus of the alpha chain, which is derived from the carboxyl end of the proenzyme. The post-translation cleavage follows an unusual pathway, termed non-hydrolytic serinolysis, in which the side chain hydroxyl group of the serine supplies its oxygen atom to form the C-terminus of the beta chain, while the remainder of the serine residue undergoes an oxidative deamination to produce ammonia and the pyruvoyl group blocking the N-terminus of the alpha chain.

The enzyme catalyses S-adenosyl-L-methionine + H(+) = S-adenosyl 3-(methylsulfanyl)propylamine + CO2. The protein operates within amine and polyamine biosynthesis; S-adenosylmethioninamine biosynthesis; S-adenosylmethioninamine from S-adenosyl-L-methionine: step 1/1. Functionally, catalyzes the decarboxylation of S-adenosylmethionine to S-adenosylmethioninamine (dcAdoMet), the propylamine donor required for the synthesis of the polyamines spermine and spermidine from the diamine putrescine. The polypeptide is S-adenosylmethionine decarboxylase proenzyme (Caldanaerobacter subterraneus subsp. tengcongensis (strain DSM 15242 / JCM 11007 / NBRC 100824 / MB4) (Thermoanaerobacter tengcongensis)).